A 141-amino-acid polypeptide reads, in one-letter code: Large ribosomal subunit protein uL11 (141 aa).

The protein belongs to the universal ribosomal protein uL11 family. In terms of assembly, part of the ribosomal stalk of the 50S ribosomal subunit. Interacts with L10 and the large rRNA to form the base of the stalk. L10 forms an elongated spine to which L12 dimers bind in a sequential fashion forming a multimeric L10(L12)X complex. One or more lysine residues are methylated.

Its function is as follows. Forms part of the ribosomal stalk which helps the ribosome interact with GTP-bound translation factors. The chain is Large ribosomal subunit protein uL11 from Lactiplantibacillus plantarum (strain ATCC BAA-793 / NCIMB 8826 / WCFS1) (Lactobacillus plantarum).